The sequence spans 1040 residues: Multidrug resistance protein MdtB (1040 aa).

Helical transmembrane passes span 16 to 36 (FILR…AGLV), 342 to 362 (DVQF…YLFL), 373 to 393 (IAVP…GFSV), 396 to 416 (LTLM…IVVI), 440 to 460 (IGFT…PLLF), 472 to 492 (FAVT…TLTP), 537 to 557 (WITL…YIVI), 865 to 885 (STIW…GVLY), 888 to 908 (FIHP…ALLA), 911 to 931 (ISGS…IGIV), 968 to 988 (ILMT…STGV), and 1002 to 1022 (GGLV…YLLF).

This sequence belongs to the resistance-nodulation-cell division (RND) (TC 2.A.6) family. MdtB subfamily. Part of a tripartite efflux system composed of MdtA, MdtB and MdtC. MdtB forms a heteromultimer with MdtC.

It is found in the cell inner membrane. In Musicola paradisiaca (strain Ech703) (Dickeya paradisiaca), this protein is Multidrug resistance protein MdtB.